Here is a 300-residue protein sequence, read N- to C-terminus: Kynurenine formamidase (300 aa).

Positions 86-90 match the HGGXW motif; it reads HGGYW. The active-site Nucleophile is the serine 157. Active-site residues include aspartate 244 and histidine 276.

Belongs to the kynurenine formamidase family. Homodimer.

The enzyme catalyses N-formyl-L-kynurenine + H2O = L-kynurenine + formate + H(+). Its pathway is amino-acid degradation; L-tryptophan degradation via kynurenine pathway; L-kynurenine from L-tryptophan: step 2/2. In terms of biological role, catalyzes the hydrolysis of N-formyl-L-kynurenine to L-kynurenine, the second step in the kynurenine pathway of tryptophan degradation. Required for elimination of toxic metabolites. The sequence is that of Kynurenine formamidase (KFase) from Drosophila melanogaster (Fruit fly).